We begin with the raw amino-acid sequence, 269 residues long: Tryptophan synthase alpha chain (269 aa).

Catalysis depends on proton acceptor residues glutamate 49 and aspartate 60.

It belongs to the TrpA family. As to quaternary structure, tetramer of two alpha and two beta chains.

It carries out the reaction (1S,2R)-1-C-(indol-3-yl)glycerol 3-phosphate + L-serine = D-glyceraldehyde 3-phosphate + L-tryptophan + H2O. The protein operates within amino-acid biosynthesis; L-tryptophan biosynthesis; L-tryptophan from chorismate: step 5/5. In terms of biological role, the alpha subunit is responsible for the aldol cleavage of indoleglycerol phosphate to indole and glyceraldehyde 3-phosphate. The protein is Tryptophan synthase alpha chain of Pseudomonas entomophila (strain L48).